A 355-amino-acid chain; its full sequence is S-adenosylmethionine:tRNA ribosyltransferase-isomerase (355 aa).

It belongs to the QueA family. In terms of assembly, monomer.

The protein resides in the cytoplasm. The catalysed reaction is 7-aminomethyl-7-carbaguanosine(34) in tRNA + S-adenosyl-L-methionine = epoxyqueuosine(34) in tRNA + adenine + L-methionine + 2 H(+). Its pathway is tRNA modification; tRNA-queuosine biosynthesis. Transfers and isomerizes the ribose moiety from AdoMet to the 7-aminomethyl group of 7-deazaguanine (preQ1-tRNA) to give epoxyqueuosine (oQ-tRNA). This Burkholderia orbicola (strain AU 1054) protein is S-adenosylmethionine:tRNA ribosyltransferase-isomerase.